The following is a 177-amino-acid chain: Protein GrpE (177 aa).

The tract at residues 1–26 (MSEEIKKDDLQEEVEATETEETVEEV) is disordered. Residues 10–26 (LQEEVEATETEETVEEV) are compositionally biased toward acidic residues.

This sequence belongs to the GrpE family. Homodimer.

Its subcellular location is the cytoplasm. Participates actively in the response to hyperosmotic and heat shock by preventing the aggregation of stress-denatured proteins, in association with DnaK and GrpE. It is the nucleotide exchange factor for DnaK and may function as a thermosensor. Unfolded proteins bind initially to DnaJ; upon interaction with the DnaJ-bound protein, DnaK hydrolyzes its bound ATP, resulting in the formation of a stable complex. GrpE releases ADP from DnaK; ATP binding to DnaK triggers the release of the substrate protein, thus completing the reaction cycle. Several rounds of ATP-dependent interactions between DnaJ, DnaK and GrpE are required for fully efficient folding. The polypeptide is Protein GrpE (Streptococcus agalactiae serotype Ia (strain ATCC 27591 / A909 / CDC SS700)).